Reading from the N-terminus, the 118-residue chain is Putative pterin-4-alpha-carbinolamine dehydratase (118 aa).

Belongs to the pterin-4-alpha-carbinolamine dehydratase family.

It carries out the reaction (4aS,6R)-4a-hydroxy-L-erythro-5,6,7,8-tetrahydrobiopterin = (6R)-L-erythro-6,7-dihydrobiopterin + H2O. This chain is Putative pterin-4-alpha-carbinolamine dehydratase, found in Pseudomonas entomophila (strain L48).